A 229-amino-acid polypeptide reads, in one-letter code: Putative N-acetylmannosamine-6-phosphate 2-epimerase (229 aa).

This sequence belongs to the NanE family.

It carries out the reaction an N-acyl-D-glucosamine 6-phosphate = an N-acyl-D-mannosamine 6-phosphate. The protein operates within amino-sugar metabolism; N-acetylneuraminate degradation; D-fructose 6-phosphate from N-acetylneuraminate: step 3/5. Its function is as follows. Converts N-acetylmannosamine-6-phosphate (ManNAc-6-P) to N-acetylglucosamine-6-phosphate (GlcNAc-6-P). This is Putative N-acetylmannosamine-6-phosphate 2-epimerase from Cutibacterium acnes (strain DSM 16379 / KPA171202) (Propionibacterium acnes).